The chain runs to 314 residues: Olfactory receptor 8U9 (314 aa).

Over 1–25 (MAQINCTQVTEFILVGLTDREELKM) the chain is Extracellular. N-linked (GlcNAc...) asparagine glycosylation is present at N5. Residues 26-46 (PLFVVFLSIYLFTTLGNLGLI) form a helical membrane-spanning segment. The Cytoplasmic segment spans residues 47–54 (LVIRTDAR). Residues 55-75 (LHTPMYFFLSNLAFVDFCYSS) traverse the membrane as a helical segment. At 76–99 (VITPKMLGNFLYKQNMISFNACAA) the chain is on the extracellular side. A disulfide bridge links C97 with C189. Residues 100 to 120 (QLGCFLAFMTAECLLLASMAY) traverse the membrane as a helical segment. Over 121 to 133 (DRYVAICNPLLYM) the chain is Cytoplasmic. A helical membrane pass occupies residues 134–154 (VLMSPGICFQLVAAPYSYSFL). Topologically, residues 155 to 196 (VALFHAILTFRLCYCHSNAINHFYCDDMPLLRLTCSDTHSKQ) are extracellular. The helical transmembrane segment at 197–217 (LWIFVCAGIMFISSLLIVFIS) threads the bilayer. Residues 218–237 (YTFIISAILRMRSAEGRRKA) are Cytoplasmic-facing. The helical transmembrane segment at 238–258 (FSTCGSHMLAVTIFYGTLIFM) threads the bilayer. At 259-271 (YLQPSSNHSLDTD) the chain is on the extracellular side. The N-linked (GlcNAc...) asparagine glycan is linked to N265. The chain crosses the membrane as a helical span at residues 272–292 (KMASVFYTVIIPMLNPLIYSL). Over 293 to 314 (RNKEVKDALKKLIASKNQMLSS) the chain is Cytoplasmic.

It belongs to the G-protein coupled receptor 1 family.

It is found in the cell membrane. In terms of biological role, potential odorant receptor. This is Olfactory receptor 8U9 from Mus musculus (Mouse).